The sequence spans 535 residues: Pentatricopeptide repeat-containing protein At5g16420, mitochondrial (535 aa).

Residues 1–28 (MFLSRVNPTRFPPFVASRRLFSASASAA) constitute a mitochondrion transit peptide. PPR repeat units lie at residues 82-112 (NYDT…LRNS), 119-153 (GENL…GVKR), 154-189 (SVRS…GITP), 190-224 (NIFT…GLVP), 225-259 (NLVT…GWYP), 260-294 (DATT…EIEP), 295-329 (NEVT…SFMP), 330-364 (DSSL…NCMP), 365-395 (DNAL…FEKG), 399-433 (SLLT…KCKP), 434-468 (NAFT…GCFP), and 469-503 (NKTT…GKVD).

The protein belongs to the PPR family. P subfamily.

It localises to the mitochondrion. The polypeptide is Pentatricopeptide repeat-containing protein At5g16420, mitochondrial (Arabidopsis thaliana (Mouse-ear cress)).